Consider the following 398-residue polypeptide: Organelle RRM domain-containing protein 1, chloroplastic (398 aa).

Residues 1–88 (MDTALPSVLI…RWVVVMDTPP (88 aa)) constitute a chloroplast transit peptide. Residues 54-70 (LLASSSESPPAQLAAAS) show a composition bias toward low complexity. The tract at residues 54–79 (LLASSSESPPAQLAAASTESQSRSSR) is disordered. One can recognise an RRM domain in the interval 299-377 (KRLFVTGLSF…WMIVVDVAKT (79 aa)).

The protein localises to the plastid. Its subcellular location is the chloroplast. Involved in C-to-U editing of chloroplastic RNA. Functions as major chloroplastic editing factor. Controls a majority of the chloroplastic editing sites. The sequence is that of Organelle RRM domain-containing protein 1, chloroplastic (ORRM1) from Zea mays (Maize).